We begin with the raw amino-acid sequence, 736 residues long: Transcription factor E2F8 (736 aa).

The segment at 1-26 (MEEGSKENCGFNGSPMGSRSPPKQLT) is disordered. Polar residues predominate over residues 15–26 (PMGSRSPPKQLT). 2 consecutive DNA-binding regions follow at residues 98-167 (RKEK…IWHG) and 240-326 (RKEK…QWTC). 4 disordered regions span residues 386-405 (RRKINSAPSSPIKSGDGSSS), 435-456 (SACKAKSTVKQPGGSDKNQTPT), 483-551 (EQTL…AVDD), and 716-736 (PGGMGCSPPESARKLDVGTDD). Over residues 393 to 405 (PSSPIKSGDGSSS) the composition is skewed to low complexity. 2 stretches are compositionally biased toward basic and acidic residues: residues 509–539 (GRHEGDGTSHSEDHSAQERHPKRLPESDRGC) and 726–736 (SARKLDVGTDD).

Belongs to the E2F/DP family. In terms of assembly, homodimer and heterodimer: mainly forms homodimers and, to a lesser extent, heterodimers with e2f7.

It is found in the nucleus. Its function is as follows. Atypical E2F transcription factor that participates in various processes such as angiogenesis and polyploidization of specialized cells. Mainly acts as a transcription repressor that binds DNA independently of DP proteins and specifically recognizes the E2 recognition site 5'-TTTC[CG]CGC-3'. Directly represses transcription of classical E2F transcription factors such as e2f1. Acts as a regulator of S-phase by recognizing and binding the E2-related site 5'-TTCCCGCC-3' and mediating repression of G1/S-regulated genes. Acts as a promoter of sprouting angiogenesis, possibly by acting as a transcription activator. In Xenopus tropicalis (Western clawed frog), this protein is Transcription factor E2F8 (e2f8).